Reading from the N-terminus, the 433-residue chain is Serine--tRNA ligase (433 aa).

Residue 235–237 (TSE) participates in L-serine binding. 266–268 (RSE) contacts ATP. Residue Glu289 coordinates L-serine. ATP is bound at residue 353–356 (EISS). Ser388 is a binding site for L-serine.

Belongs to the class-II aminoacyl-tRNA synthetase family. Type-1 seryl-tRNA synthetase subfamily. In terms of assembly, homodimer. The tRNA molecule binds across the dimer.

The protein resides in the cytoplasm. It catalyses the reaction tRNA(Ser) + L-serine + ATP = L-seryl-tRNA(Ser) + AMP + diphosphate + H(+). The catalysed reaction is tRNA(Sec) + L-serine + ATP = L-seryl-tRNA(Sec) + AMP + diphosphate + H(+). It functions in the pathway aminoacyl-tRNA biosynthesis; selenocysteinyl-tRNA(Sec) biosynthesis; L-seryl-tRNA(Sec) from L-serine and tRNA(Sec): step 1/1. In terms of biological role, catalyzes the attachment of serine to tRNA(Ser). Is also able to aminoacylate tRNA(Sec) with serine, to form the misacylated tRNA L-seryl-tRNA(Sec), which will be further converted into selenocysteinyl-tRNA(Sec). The sequence is that of Serine--tRNA ligase from Burkholderia ambifaria (strain ATCC BAA-244 / DSM 16087 / CCUG 44356 / LMG 19182 / AMMD) (Burkholderia cepacia (strain AMMD)).